The sequence spans 420 residues: Tyrosine--tRNA ligase 1 (420 aa).

An L-tyrosine-binding site is contributed by tyrosine 35. Positions 40–49 (PTAGSLHIGH) match the 'HIGH' region motif. Residues tyrosine 172 and glutamine 176 each coordinate L-tyrosine. A 'KMSKS' region motif is present at residues 232 to 236 (KFGKT). Lysine 235 is a binding site for ATP. An S4 RNA-binding domain is found at 355 to 419 (INIAELLVKS…GKKQFRLIKL (65 aa)).

The protein belongs to the class-I aminoacyl-tRNA synthetase family. TyrS type 1 subfamily. Homodimer.

It localises to the cytoplasm. The enzyme catalyses tRNA(Tyr) + L-tyrosine + ATP = L-tyrosyl-tRNA(Tyr) + AMP + diphosphate + H(+). Catalyzes the attachment of tyrosine to tRNA(Tyr) in a two-step reaction: tyrosine is first activated by ATP to form Tyr-AMP and then transferred to the acceptor end of tRNA(Tyr). In Pseudoalteromonas translucida (strain TAC 125), this protein is Tyrosine--tRNA ligase 1.